Reading from the N-terminus, the 106-residue chain is Iron-sulfur cluster assembly protein CyaY (106 aa).

It belongs to the frataxin family.

Functionally, involved in iron-sulfur (Fe-S) cluster assembly. May act as a regulator of Fe-S biogenesis. The polypeptide is Iron-sulfur cluster assembly protein CyaY (Cronobacter sakazakii (strain ATCC BAA-894) (Enterobacter sakazakii)).